Here is a 120-residue protein sequence, read N- to C-terminus: Large ribosomal subunit protein uL22 (120 aa).

This sequence belongs to the universal ribosomal protein uL22 family. Part of the 50S ribosomal subunit.

In terms of biological role, this protein binds specifically to 23S rRNA; its binding is stimulated by other ribosomal proteins, e.g. L4, L17, and L20. It is important during the early stages of 50S assembly. It makes multiple contacts with different domains of the 23S rRNA in the assembled 50S subunit and ribosome. Functionally, the globular domain of the protein is located near the polypeptide exit tunnel on the outside of the subunit, while an extended beta-hairpin is found that lines the wall of the exit tunnel in the center of the 70S ribosome. This Borreliella afzelii (strain PKo) (Borrelia afzelii) protein is Large ribosomal subunit protein uL22.